The following is a 299-amino-acid chain: Pyridoxal 5'-phosphate synthase subunit PdxS (299 aa).

Residue D29 coordinates D-ribose 5-phosphate. K86 acts as the Schiff-base intermediate with D-ribose 5-phosphate in catalysis. G158 provides a ligand contact to D-ribose 5-phosphate. R170 lines the D-glyceraldehyde 3-phosphate pocket. D-ribose 5-phosphate contacts are provided by residues G219 and 240 to 241 (GS).

The protein belongs to the PdxS/SNZ family. As to quaternary structure, in the presence of PdxT, forms a dodecamer of heterodimers.

The enzyme catalyses aldehydo-D-ribose 5-phosphate + D-glyceraldehyde 3-phosphate + L-glutamine = pyridoxal 5'-phosphate + L-glutamate + phosphate + 3 H2O + H(+). It participates in cofactor biosynthesis; pyridoxal 5'-phosphate biosynthesis. Functionally, catalyzes the formation of pyridoxal 5'-phosphate from ribose 5-phosphate (RBP), glyceraldehyde 3-phosphate (G3P) and ammonia. The ammonia is provided by the PdxT subunit. Can also use ribulose 5-phosphate and dihydroxyacetone phosphate as substrates, resulting from enzyme-catalyzed isomerization of RBP and G3P, respectively. The chain is Pyridoxal 5'-phosphate synthase subunit PdxS from Mycobacterium bovis (strain ATCC BAA-935 / AF2122/97).